The primary structure comprises 384 residues: MDQDAFILKEDSEVEREAPGGRESLSDVIGFLDAVLSSEPTDIGGDRSWLHNTINTPQGPGSAHRAKSEGEGEVSTPSTQDNRSGEESRVSGRTSKPEAEAHAGNLDKQNIHRAFGGRTGTNSVSQDLGDGGDSGILENPPNERGYPRSGIEDENREMAAHPDKRGEDQAEGLPEEVRGGTSLPDEGEGGASNNGRSMEPGSSHSARVTGVLVIPSPELEEAVLRRNKRRPTNSGSKPLTPATVPGTRSPPLNRYNSTGSPPGKPPSTQDEHINSGDTPAVRVKDRKPPIGTRSVSDCPANGRPIHPGLESDSTKKGHRREHIIYERDGYIVDESWCNPVCSRIRIIPRRELCVCKTCPKVCKLCRDDIQCMRPDPFCREIFRS.

Disordered stretches follow at residues 1-23 (MDQDAFILKEDSEVEREAPGGRE) and 38-318 (SEPT…KKGH). A compositionally biased stretch (basic and acidic residues) spans 7–20 (ILKEDSEVEREAPG). Residues 50-59 (LHNTINTPQG) show a composition bias toward polar residues. Position 68 is a phosphoserine; by host (S68). The span at 83–101 (RSGEESRVSGRTSKPEAEA) shows a compositional bias: basic and acidic residues. S125 bears the Phosphoserine; by host mark. Over residues 150–168 (GIEDENREMAAHPDKRGED) the composition is skewed to basic and acidic residues. The span at 191–206 (ASNNGRSMEPGSSHSA) shows a compositional bias: polar residues. 4 positions are modified to phosphoserine; by host: S192, S249, S257, and S260. Zn(2+) contacts are provided by H318, C337, C341, C353, C355, C358, C362, and C365.

This sequence belongs to the paramyxoviruses V protein family. Interacts with host IFIH1/MDA5 and DHX58/LGP2. Interacts with host IRF3. Interacts with host RIGI regulatory protein (via CARDs domain) and host TRIM25 (via SPRY domain); these interactions prevent TRIM25-mediated ubiquitination of RIG-I and disrupts downstream RIG-I signaling.

Its subcellular location is the host cytoplasm. Functionally, plays an essential role in the inhibition of host immune response. Prevents the establishment of cellular antiviral state by blocking interferon-alpha/beta (IFN-alpha/beta) production and signaling pathway. Interacts with host IFIH1/MDA5 and DHX58/LGP2 to inhibit the transduction pathway involved in the activation of IFN-beta promoter, thus protecting the virus against cell antiviral state. Also interacts with and inhibits host IRF3. Blocks the type I interferon signaling pathway by disrupting the RIG-I signaling pathway. This is Protein V (P/V/C) from Sendai virus (strain Harris) (SeV).